The following is a 565-amino-acid chain: MSEQKLALNEYLKTDSDYLRGTIKEGLDSSVTGSFSDGDQQLIKFHGFYQQDDRDLRNERKEQKLEPLYSFMLRARVPGGVCTPKQWLGVDEIASTLTSSNSIRLTTRQTFQYHGIPKRNLKTIIQGLDREALDSIAACGDVNRNVMCNPNPVESKLHAQAYEVAKKLSDHLLPHTRAYAEIWLDEEKLLTTEDETVEPVYGKTYLPRKFKMAVAVPPDNDVDVYTNDLGFIAVAENGELVGFNLTAGGGMGSTHGEVETFPRLADDFGFIKTEDVMKFAEAVMTVQRDWGNRTNRKRSRLKYTIVDHGYEKFKAEVEARAGVKFEPKRDVVIGDRGDRYGWVEGVDGKWHLTLFIESGRIKDVPGKSLQTGMREIAKIHKGDFRMTSNQNMIIAGVAPEDKATIEGLARKHGLLGQVLTQTRGHSIACVALPTCPLAMAEAERYFPEFIDHIDALQAKNGISDQAIVVRMTGCPNGCARPFAAEIGLVGKAPGRYNLYLGANFEGTRLNKMYRENIQEAEILAELDALFARYAVERNAGETFGNFTVRTGVVKAVIDAAKDFHG.

[4Fe-4S] cluster contacts are provided by Cys-429, Cys-435, Cys-474, and Cys-478. Cys-478 is a binding site for siroheme.

It belongs to the nitrite and sulfite reductase 4Fe-4S domain family. Alpha(8)-beta(8). The alpha component is a flavoprotein, the beta component is a hemoprotein. It depends on siroheme as a cofactor. [4Fe-4S] cluster is required as a cofactor.

The enzyme catalyses hydrogen sulfide + 3 NADP(+) + 3 H2O = sulfite + 3 NADPH + 4 H(+). It participates in sulfur metabolism; hydrogen sulfide biosynthesis; hydrogen sulfide from sulfite (NADPH route): step 1/1. Component of the sulfite reductase complex that catalyzes the 6-electron reduction of sulfite to sulfide. This is one of several activities required for the biosynthesis of L-cysteine from sulfate. The chain is Sulfite reductase [NADPH] hemoprotein beta-component from Shewanella sp. (strain MR-7).